A 204-amino-acid polypeptide reads, in one-letter code: Thymidine kinase (204 aa).

Residues 23-30 (GSMFSGKT) and 95-98 (DEAQ) contribute to the ATP site. Glu-96 functions as the Proton acceptor in the catalytic mechanism. Zn(2+)-binding residues include Cys-152, Cys-155, Cys-184, and Cys-187.

The protein belongs to the thymidine kinase family. In terms of assembly, homotetramer.

The protein localises to the cytoplasm. It catalyses the reaction thymidine + ATP = dTMP + ADP + H(+). This is Thymidine kinase from Porphyromonas gingivalis (strain ATCC BAA-308 / W83).